Reading from the N-terminus, the 245-residue chain is 8-amino-3,8-dideoxy-manno-octulosonate cytidylyltransferase (245 aa).

This sequence belongs to the KdsB family.

It localises to the cytoplasm. It catalyses the reaction 8-amino-3,8-dideoxy-alpha-D-manno-octulosonate + CTP = CMP-8-amino-3,8-dideoxy-alpha-D-manno-oct-2-ulosonate + diphosphate. It participates in bacterial outer membrane biogenesis; lipopolysaccharide biosynthesis. Activates KDO8N (a required 8-carbon sugar) for incorporation into bacterial lipopolysaccharide in the Shewanella genus. The protein is 8-amino-3,8-dideoxy-manno-octulosonate cytidylyltransferase of Shewanella loihica (strain ATCC BAA-1088 / PV-4).